The following is a 370-amino-acid chain: Mitogen-activated protein kinase 3 (370 aa).

Residues 38–324 (RPPIIPIGRG…VEQALNHQYL (287 aa)) enclose the Protein kinase domain. ATP is bound by residues 44–52 (IGRGAYGIV) and Lys-67. Asp-164 serves as the catalytic Proton acceptor. A Phosphothreonine modification is found at Thr-196. A TXY motif is present at residues 196–198 (TEY). Tyr-198 is modified (phosphotyrosine). The residue at position 201 (Thr-201) is a Phosphothreonine.

The protein belongs to the protein kinase superfamily. CMGC Ser/Thr protein kinase family. MAP kinase subfamily. Interacts with DSPTP1B/MKP2, NDPK2 and VIP1. The interaction with DSPTP1B/MKP2 is repressed by fungal elicitation. Binds to LIP5. Interacts with VQ4. Interacts with RACK1A, RACK1B and RACK1C. Interacts with FLZ9. Interacts with MKK5. In terms of processing, dually phosphorylated on Thr-196 and Tyr-198, which activates the enzyme. Dephosphorylated by DSPTP1B/MKP2.

The protein localises to the cytoplasm. The protein resides in the nucleus. It localises to the cell cortex. The enzyme catalyses L-seryl-[protein] + ATP = O-phospho-L-seryl-[protein] + ADP + H(+). It carries out the reaction L-threonyl-[protein] + ATP = O-phospho-L-threonyl-[protein] + ADP + H(+). Its activity is regulated as follows. Activated by threonine and tyrosine phosphorylation. Activated by MAP kinase kinases MKK4, MKK5, MKK7 and MKK9. Activated in response to hydrogen peroxide, ozone, salt stress and flagellin bacterial elicitor. Triggered by Agrobacterium upon T-DNA transfer. Repressed by DSPTP1B/MKP2-mediated dephosphorylation. In terms of biological role, involved in oxidative stress-mediated signaling cascade (such as ozone). Involved in the innate immune MAP kinase signaling cascade (MEKK1, MKK4/MKK5 and MPK3/MPK6) downstream of bacterial flagellin receptor FLS2. May be involved in hypersensitive response (HR)-mediated signaling cascade by modulating LIP5 phosphorylation and subsequent multivesicular bodies (MVBs) trafficking. May phosphorylate regulators of WRKY transcription factors. Mediates the phosphorylation of VIP1 and subsequent stress genes transcription in response to Agrobacterium. MKK9-MPK3/MPK6 module phosphorylates and activates EIN3, leading to the promotion of EIN3-mediated transcription in ethylene signaling. MPK3/MPK6 cascade regulates camalexin synthesis through transcriptional regulation of the biosynthetic genes after pathogen infection. YDA-MKK4/MKK5-MPK3/MPK6 module regulates stomatal cell fate before the guard mother cell (GMC) is specified. When activated, reinforces the feedback loop by phosphorylating BASL, and inhibits stomatal fate by phosphorylating SPCH. This MAPK cascade also functions downstream of the ER receptor in regulating coordinated local cell proliferation, which shapes the morphology of plant organs. This chain is Mitogen-activated protein kinase 3, found in Arabidopsis thaliana (Mouse-ear cress).